A 106-amino-acid chain; its full sequence is Thiosulfate sulfurtransferase GlpE (106 aa).

A Rhodanese domain is found at 17–105; the sequence is QLPSVCLADI…WRHVYPYTAT (89 aa). Cys65 serves as the catalytic Cysteine persulfide intermediate.

Belongs to the GlpE family.

The protein resides in the cytoplasm. The catalysed reaction is thiosulfate + hydrogen cyanide = thiocyanate + sulfite + 2 H(+). It carries out the reaction thiosulfate + [thioredoxin]-dithiol = [thioredoxin]-disulfide + hydrogen sulfide + sulfite + 2 H(+). In terms of biological role, transferase that catalyzes the transfer of sulfur from thiosulfate to thiophilic acceptors such as cyanide or dithiols. May function in a CysM-independent thiosulfate assimilation pathway by catalyzing the conversion of thiosulfate to sulfite, which can then be used for L-cysteine biosynthesis. In Tolumonas auensis (strain DSM 9187 / NBRC 110442 / TA 4), this protein is Thiosulfate sulfurtransferase GlpE.